The primary structure comprises 614 residues: Leucine-rich repeat and immunoglobulin-like domain-containing nogo receptor-interacting protein 1 (614 aa).

Residues 1 to 35 (MLAGGVRSMPSPLLACWQPILLLVLGSVLSGSATG) form the signal peptide. Disulfide bonds link Cys-36-Cys-42 and Cys-40-Cys-51. One can recognise an LRRNT domain in the interval 36-65 (CPPRCECSAQDRAVLCHRKRFVAVPEGIPT). At 36–555 (CPPRCECSAQ…FDIKTLIIAT (520 aa)) the chain is on the extracellular side. LRR repeat units follow at residues 66–87 (ETRL…EFAS), 90–111 (HLEE…AFNN), 114–135 (NLRT…VFTG), 138–159 (NLTK…MFQD), 162–183 (NLKS…AFSG), 186–207 (SLEQ…ALSH), 210–231 (GLIV…SFKR), 258–279 (NLTS…AVRH), 282–303 (YLRF…MLHE), 306–327 (RLQE…AFRG), and 330–351 (YLRV…VFHS). N-linked (GlcNAc...) asparagine glycosylation is present at Asn-138. Asn-196 carries an N-linked (GlcNAc...) asparagine glycan. Residues Asn-258, Asn-268, and Asn-287 are each glycosylated (N-linked (GlcNAc...) asparagine). Asn-335 is a glycosylation site (N-linked (GlcNAc...) asparagine). An LRRCT domain is found at 363-417 (NPLACDCRLLWVFRRRWRLNFNRQQPTCATPEFVQGKEFKDFPDVLLPNYFTCRR). 3 disulfides stabilise this stretch: Cys-367/Cys-390, Cys-369/Cys-415, and Cys-440/Cys-491. An Ig-like C2-type domain is found at 405-507 (PDVLLPNYFT…GNDSMPAHLH (103 aa)). Residues Asn-486, Asn-499, Asn-520, and Asn-536 are each glycosylated (N-linked (GlcNAc...) asparagine). A helical membrane pass occupies residues 556 to 576 (TMGFISFLGVVLFCLVLLFLW). Residues 577–614 (SRGKGNTKHNIEIEYVPRKSDAGISSADAPRKFNMKMI) are Cytoplasmic-facing. Ser-596 bears the Phosphoserine mark.

As to quaternary structure, homotetramer. Forms a ternary complex with RTN4R/NGFR and RTN4R/TNFRSF19. Interacts with NGRF, RTN4R and MYT1L. Post-translationally, N-glycosylated. Contains predominantly high-mannose glycans.

It localises to the cell membrane. Functionally, functional component of the Nogo receptor signaling complex (RTN4R/NGFR) in RhoA activation responsible for some inhibition of axonal regeneration by myelin-associated factors. Is also an important negative regulator of oligodentrocyte differentiation and axonal myelination. Acts in conjunction with RTN4 and RTN4R in regulating neuronal precursor cell motility during cortical development. This is Leucine-rich repeat and immunoglobulin-like domain-containing nogo receptor-interacting protein 1 (LINGO1) from Pongo abelii (Sumatran orangutan).